A 265-amino-acid chain; its full sequence is Glutamate racemase (265 aa).

Substrate is bound by residues 9-10 (DS) and 41-42 (YS). Residue Cys-73 is the Proton donor/acceptor of the active site. Residue 74–75 (NT) participates in substrate binding. The active-site Proton donor/acceptor is the Cys-184. Residue 185 to 186 (TH) participates in substrate binding.

Belongs to the aspartate/glutamate racemases family.

The enzyme catalyses L-glutamate = D-glutamate. It participates in cell wall biogenesis; peptidoglycan biosynthesis. Its function is as follows. Provides the (R)-glutamate required for cell wall biosynthesis. This Actinobacillus pleuropneumoniae serotype 5b (strain L20) protein is Glutamate racemase.